The sequence spans 144 residues: EF-hand calcium-binding domain-containing protein 8 (144 aa).

EF-hand domains lie at 52 to 86 (IHLA…VLSS) and 87 to 122 (VSDE…EFQG).

This chain is EF-hand calcium-binding domain-containing protein 8 (EFCAB8), found in Homo sapiens (Human).